We begin with the raw amino-acid sequence, 804 residues long: ATP-dependent RNA helicase dbp4 (804 aa).

The tract at residues 1–24 is disordered; the sequence is MAPANAPRNGKYAKSSQRTLKRKR. Positions 46–74 match the Q motif motif; the sequence is KAFTDLPLSEPTLSGLSASHYKTLTDIQS. Residues 77–251 enclose the Helicase ATP-binding domain; the sequence is VSHALKGRDI…RLSLQDPEYV (175 aa). 90–97 is a binding site for ATP; that stretch reads AKTGSGKT. The DEAD box signature appears at 199-202; the sequence is DEAD. One can recognise a Helicase C-terminal domain in the interval 277–436; sequence KLDILWSFIR…SIKNQLQNMC (160 aa). Disordered stretches follow at residues 493–541, 589–615, and 695–804; these read GDDT…DRMF, DKQL…KDVK, and LADV…GLLG. Basic and acidic residues predominate over residues 521–541; it reads DEKKSKKKDAPQVRTKYDRMF. Residues 695-705 show a composition bias toward basic and acidic residues; sequence LADVEDKELVK. Residues 706-715 show a composition bias toward basic residues; the sequence is QKRREKKEKR.

Belongs to the DEAD box helicase family. DDX10/DBP4 subfamily. In terms of assembly, interacts with the U3 and U14 snoRNAs. Associates with pre-ribosomal complexes.

The protein localises to the nucleus. It is found in the nucleolus. The catalysed reaction is ATP + H2O = ADP + phosphate + H(+). Its function is as follows. ATP-dependent RNA helicase required for ribosome biogenesis. Involved in the release of U14 snoRNA in pre-ribosomal complexes. Required for pre-rRNA cleavage at site A2. This is ATP-dependent RNA helicase dbp4 (dbp4) from Aspergillus terreus (strain NIH 2624 / FGSC A1156).